The following is a 123-amino-acid chain: Immunoglobulin lambda variable 5-39 (123 aa).

An N-terminal signal peptide occupies residues 1-19 (MAWTPLLLLLLSHCTGSLS). Residues 20–44 (QPVLTQPTSLSASPGASARFTCTLR) are framework-1. Positions 21-123 (PVLTQPTSLS…YCAIWYSSTS (103 aa)) constitute an Ig-like domain. Cysteines 41 and 115 form a disulfide. The complementarity-determining-1 stretch occupies residues 45-53 (SGINVGTYR). Residues 54–70 (IYWYQQKPGSLPRYLLR) form a framework-2 region. The complementarity-determining-2 stretch occupies residues 71–77 (YKSDSDK). Positions 78–115 (QQGSGVPSRFSGSKDASTNAGLLLISGLQSEDEADYYC) are framework-3. Residues 116–123 (AIWYSSTS) are complementarity-determining-3.

As to quaternary structure, immunoglobulins are composed of two identical heavy chains and two identical light chains; disulfide-linked.

The protein localises to the secreted. It localises to the cell membrane. Functionally, v region of the variable domain of immunoglobulin light chains that participates in the antigen recognition. Immunoglobulins, also known as antibodies, are membrane-bound or secreted glycoproteins produced by B lymphocytes. In the recognition phase of humoral immunity, the membrane-bound immunoglobulins serve as receptors which, upon binding of a specific antigen, trigger the clonal expansion and differentiation of B lymphocytes into immunoglobulins-secreting plasma cells. Secreted immunoglobulins mediate the effector phase of humoral immunity, which results in the elimination of bound antigens. The antigen binding site is formed by the variable domain of one heavy chain, together with that of its associated light chain. Thus, each immunoglobulin has two antigen binding sites with remarkable affinity for a particular antigen. The variable domains are assembled by a process called V-(D)-J rearrangement and can then be subjected to somatic hypermutations which, after exposure to antigen and selection, allow affinity maturation for a particular antigen. The chain is Immunoglobulin lambda variable 5-39 from Homo sapiens (Human).